A 396-amino-acid polypeptide reads, in one-letter code: Anhydro-N-acetylmuramic acid kinase (396 aa).

Gly21 to Asp28 lines the ATP pocket.

It belongs to the anhydro-N-acetylmuramic acid kinase family.

It catalyses the reaction 1,6-anhydro-N-acetyl-beta-muramate + ATP + H2O = N-acetyl-D-muramate 6-phosphate + ADP + H(+). Its pathway is amino-sugar metabolism; 1,6-anhydro-N-acetylmuramate degradation. It functions in the pathway cell wall biogenesis; peptidoglycan recycling. Functionally, catalyzes the specific phosphorylation of 1,6-anhydro-N-acetylmuramic acid (anhMurNAc) with the simultaneous cleavage of the 1,6-anhydro ring, generating MurNAc-6-P. Is required for the utilization of anhMurNAc either imported from the medium or derived from its own cell wall murein, and thus plays a role in cell wall recycling. The sequence is that of Anhydro-N-acetylmuramic acid kinase from Caldanaerobacter subterraneus subsp. tengcongensis (strain DSM 15242 / JCM 11007 / NBRC 100824 / MB4) (Thermoanaerobacter tengcongensis).